The sequence spans 632 residues: Putative ankyrin repeat protein L767 (632 aa).

ANK repeat units lie at residues Tyr61–Phe97, Phe228–Glu250, Lys251–Asp282, Asn345–Asp374, and Asn517–Asp546.

The sequence is that of Putative ankyrin repeat protein L767 from Acanthamoeba polyphaga mimivirus (APMV).